The chain runs to 195 residues: uncharacterized protein (195 aa).

A signal peptide spans 1–16 (MIRTIIVFMLLTISFG).

This is an uncharacterized protein from Acanthamoeba polyphaga mimivirus (APMV).